We begin with the raw amino-acid sequence, 168 residues long: Putative insulin-like growth factor 2 antisense gene protein (168 aa).

Disordered regions lie at residues 1 to 91 (MSKR…ERSN) and 108 to 168 (PLRR…RPGK). Composition is skewed to basic residues over residues 59–70 (AQRRRGSARRGA) and 159–168 (RWRQPGRPGK).

This is Putative insulin-like growth factor 2 antisense gene protein (IGF2-AS) from Homo sapiens (Human).